We begin with the raw amino-acid sequence, 816 residues long: H(+)/Cl(-) exchange transporter 5 (816 aa).

Topologically, residues methionine 1–alanine 124 are cytoplasmic. The next 2 membrane-spanning stretches (helical) occupy residues phenylalanine 125 to glycine 162 and valine 208 to phenylalanine 231. The Selectivity filter part_1 motif lies at glycine 237–proline 241. Serine 238 contacts chloride. The segment at residues isoleucine 240–leucine 247 is an intramembrane region (helical). The next 2 membrane-spanning stretches (helical) occupy residues leucine 256–glycine 275 and glutamate 281–asparagine 300. The Selectivity filter part_2 signature appears at glycine 279–proline 283. 2 intramembrane regions (helical) span residues valine 312–alanine 324 and proline 328–leucine 336. 5 consecutive transmembrane segments (helical) span residues leucine 348–asparagine 366, leucine 389–cysteine 414, leucine 422–phenylalanine 442, methionine 498–methionine 518, and glycine 523–glycine 542. The Selectivity filter part_3 signature appears at glycine 523–proline 527. Phenylalanine 525 contacts chloride. The segment at residues glycine 570–valine 584 is an intramembrane region (helical). The segment at residues threonine 585–methionine 587 is an intramembrane region (note=Loop between two helices). An intramembrane region (helical) is located at residues threonine 588–threonine 599. The segment at residues glycine 600 to tyrosine 604 is an intramembrane region (note=Loop between two helices). The chain crosses the membrane as a helical span at residues isoleucine 605 to leucine 622. At glycine 623–asparagine 816 the chain is on the cytoplasmic side. Tyrosine 628 is a chloride binding site. CBS domains are found at residues methionine 656–lysine 720 and isoleucine 752–serine 812. Residues threonine 666, tyrosine 687–glycine 689, and threonine 794–aspartate 797 contribute to the ATP site.

It belongs to the chloride channel (TC 2.A.49) family. ClC-5/CLCN5 subfamily. As to quaternary structure, interacts with NEDD4 and NEDD4L. In terms of processing, ubiquitinated by NEDD4L in the presence of albumin; which promotes endocytosis and proteasomal degradation. Kidney specific.

It is found in the golgi apparatus membrane. It localises to the endosome membrane. The protein resides in the cell membrane. It catalyses the reaction 2 chloride(in) + H(+)(out) = 2 chloride(out) + H(+)(in). Its function is as follows. Proton-coupled chloride transporter. Functions as antiport system and exchanges chloride ions against protons. Important for normal acidification of the endosome lumen. May play an important role in renal tubular function. The CLC channel family contains both chloride channels and proton-coupled anion transporters that exchange chloride or another anion for protons. The absence of conserved gating glutamate residues is typical for family members that function as channels. The chain is H(+)/Cl(-) exchange transporter 5 (Clcn5) from Mus musculus (Mouse).